A 176-amino-acid polypeptide reads, in one-letter code: Sarcoplasmic calcium-binding protein (176 aa).

Thr-1 carries the post-translational modification N-acetylthreonine. EF-hand domains are found at residues 3-38 (YLVS…FTDL), 55-90 (KWWD…AFLA), 91-126 (TMTA…FGHE), and 127-160 (NESV…SFVT). Residues Asp-16, Asn-18, Asp-20, and Asn-27 each coordinate Ca(2+). Asp-104, Asp-106, Asp-108, Ser-110, and Glu-115 together coordinate Ca(2+).

Its function is as follows. Like parvalbumins, SCPs seem to be more abundant in fast contracting muscles, but no functional relationship can be established from this distribution. This Mizuhopecten yessoensis (Japanese scallop) protein is Sarcoplasmic calcium-binding protein.